The sequence spans 1017 residues: Disease resistance protein RML1B (1017 aa).

A TIR domain is found at 12 to 176 (YKFNVFASFH…KIARDVLDKL (165 aa)). Glutamate 87 is an active-site residue. In terms of domain architecture, NB-ARC spans 191-447 (EAHLREIKSL…HIAIFFNKED (257 aa)). LRR repeat units follow at residues 539 to 562 (ISRI…QFLK), 583 to 605 (PCLL…TFNP), 606 to 628 (EHLV…TQPL), 629 to 652 (KNLK…SNAT), 654 to 675 (LEYL…ISHL), 676 to 698 (HKLE…HMNL), 699 to 724 (ESLQ…NIRY), 738 to 760 (CPGL…THLP), 761 to 782 (TSLT…CFKS), and 784 to 809 (HQLK…SLLT).

The catalysed reaction is NAD(+) + H2O = ADP-D-ribose + nicotinamide + H(+). TIR-NB-LRR receptor-like protein that confers resistance to the pathogen Leptosphaeria maculans (blackleg disease). The chain is Disease resistance protein RML1B from Arabidopsis thaliana (Mouse-ear cress).